The following is a 255-amino-acid chain: Thiazole synthase (255 aa).

The active-site Schiff-base intermediate with DXP is the K96. 1-deoxy-D-xylulose 5-phosphate is bound by residues G157, 183–184 (AG), and 205–206 (NT).

This sequence belongs to the ThiG family. In terms of assembly, homotetramer. Forms heterodimers with either ThiH or ThiS.

The protein localises to the cytoplasm. It carries out the reaction [ThiS sulfur-carrier protein]-C-terminal-Gly-aminoethanethioate + 2-iminoacetate + 1-deoxy-D-xylulose 5-phosphate = [ThiS sulfur-carrier protein]-C-terminal Gly-Gly + 2-[(2R,5Z)-2-carboxy-4-methylthiazol-5(2H)-ylidene]ethyl phosphate + 2 H2O + H(+). It functions in the pathway cofactor biosynthesis; thiamine diphosphate biosynthesis. Catalyzes the rearrangement of 1-deoxy-D-xylulose 5-phosphate (DXP) to produce the thiazole phosphate moiety of thiamine. Sulfur is provided by the thiocarboxylate moiety of the carrier protein ThiS. In vitro, sulfur can be provided by H(2)S. The polypeptide is Thiazole synthase (Bacillus licheniformis (strain ATCC 14580 / DSM 13 / JCM 2505 / CCUG 7422 / NBRC 12200 / NCIMB 9375 / NCTC 10341 / NRRL NRS-1264 / Gibson 46)).